Reading from the N-terminus, the 341-residue chain is N-acetyl-gamma-glutamyl-phosphate reductase (341 aa).

Residue Cys-145 is part of the active site.

This sequence belongs to the NAGSA dehydrogenase family. Type 1 subfamily.

The protein localises to the cytoplasm. The enzyme catalyses N-acetyl-L-glutamate 5-semialdehyde + phosphate + NADP(+) = N-acetyl-L-glutamyl 5-phosphate + NADPH + H(+). Its pathway is amino-acid biosynthesis; L-arginine biosynthesis; N(2)-acetyl-L-ornithine from L-glutamate: step 3/4. Its function is as follows. Catalyzes the NADPH-dependent reduction of N-acetyl-5-glutamyl phosphate to yield N-acetyl-L-glutamate 5-semialdehyde. In Streptomyces clavuligerus, this protein is N-acetyl-gamma-glutamyl-phosphate reductase.